A 473-amino-acid polypeptide reads, in one-letter code: 3-isopropylmalate dehydratase large subunit (473 aa).

The [4Fe-4S] cluster site is built by Cys354, Cys414, and Cys417.

This sequence belongs to the aconitase/IPM isomerase family. LeuC type 1 subfamily. Heterodimer of LeuC and LeuD. The cofactor is [4Fe-4S] cluster.

It carries out the reaction (2R,3S)-3-isopropylmalate = (2S)-2-isopropylmalate. Its pathway is amino-acid biosynthesis; L-leucine biosynthesis; L-leucine from 3-methyl-2-oxobutanoate: step 2/4. Its function is as follows. Catalyzes the isomerization between 2-isopropylmalate and 3-isopropylmalate, via the formation of 2-isopropylmaleate. This is 3-isopropylmalate dehydratase large subunit from Mycobacterium bovis (strain ATCC BAA-935 / AF2122/97).